An 862-amino-acid polypeptide reads, in one-letter code: uncharacterized protein (862 aa).

An N-terminal signal peptide occupies residues 1 to 25 (MKPRPYSVFLFLHIVFYSLLSAVNG). The Lumenal portion of the chain corresponds to 26 to 61 (SPSLDYFETCSNFVPRAGIPTFSPYAVIKNFDEVNR). Residues 62–82 (MYYIQVVGNLSGVITIVGGNG) form a helical membrane-spanning segment. Residues 83–187 (SHIHAASVYS…STTLYYFYPV (105 aa)) are Cytoplasmic-facing. A helical transmembrane segment spans residues 188-208 (ISYLVVVSLAYVSFSIIYALF). At 209-230 (LNPWTGSLDPFKSIFNFNMDPD) the chain is on the lumenal side. The helical transmembrane segment at 231-250 (ALRLTSLGFFDFVQYLQFAV) threads the bilayer. The Cytoplasmic segment spans residues 251–256 (STAQVS). A helical transmembrane segment spans residues 257-277 (VMFPKFYINIMAALSWGTALF). At 278-329 (RFPIFSEPAEYQFADFADLSVASSSYADYLPKSYGMYSFLDSIGIGTACWLP) the chain is on the lumenal side. Residues 330–350 (FLIVMVIYLFAALFVALLVIF) form a helical membrane-spanning segment. The Cytoplasmic segment spans residues 351–372 (LKWLMSRIFNETIAETRWDTWS). Residues 373–393 (FIAGSLIRLYFLTYFPTVAYM) traverse the membrane as a helical segment. The Lumenal portion of the chain corresponds to 394–404 (SFQFVAPPTGY). Residues 405-425 (EIIPVLWFIFFGIFIPVYLYM) traverse the membrane as a helical segment. The Cytoplasmic segment spans residues 426–457 (NLAFVEPSSKLLEDQTYLHLFGSIYNSFREER). The helical transmembrane segment at 458 to 480 (VMFWIFPIAVQFMRGITVGVIGS) threads the bilayer. The Lumenal segment spans residues 481–483 (SGS). A helical transmembrane segment spans residues 484–503 (AQLAIFFILEVANVVAYAYV). Over 504–514 (RPHFPQTSMNT) the chain is Cytoplasmic. Residues 515-535 (LNTFISTMRLITVILMIPLDP) traverse the membrane as a helical segment. At 536–545 (RLKVLGISRD) the chain is on the lumenal side. Residues 546-566 (LLAYAILFIHIMVCILFLLLS) traverse the membrane as a helical segment. At 567-862 (TQRFMEVSAR…AESAWSIPHP (296 aa)) the chain is on the cytoplasmic side. The span at 668–686 (QASSLVPSKNNTASSSSLM) shows a compositional bias: polar residues. Disordered regions lie at residues 668–717 (QASS…SVRK) and 815–862 (VLRS…IPHP). Residues 689–700 (SPVTPSSPYSTS) are compositionally biased toward low complexity. Over residues 834-850 (EPSRDEQYSMERKKTDD) the composition is skewed to basic and acidic residues.

The protein belongs to the transient receptor potential (TRP) ion channel family.

Its subcellular location is the cytoplasm. It localises to the golgi apparatus membrane. This is an uncharacterized protein from Schizosaccharomyces pombe (strain 972 / ATCC 24843) (Fission yeast).